Consider the following 362-residue polypeptide: Peptide chain release factor 1 (362 aa).

An N5-methylglutamine modification is found at Q235.

The protein belongs to the prokaryotic/mitochondrial release factor family. Post-translationally, methylated by PrmC. Methylation increases the termination efficiency of RF1.

It is found in the cytoplasm. Peptide chain release factor 1 directs the termination of translation in response to the peptide chain termination codons UAG and UAA. In Variovorax paradoxus (strain S110), this protein is Peptide chain release factor 1.